The sequence spans 416 residues: Glutamyl-tRNA reductase (416 aa).

Residues T49–R52, S105, E110–Q112, and Q116 contribute to the substrate site. The Nucleophile role is filled by C50. G185–I190 is an NADP(+) binding site.

It belongs to the glutamyl-tRNA reductase family. In terms of assembly, homodimer.

It catalyses the reaction (S)-4-amino-5-oxopentanoate + tRNA(Glu) + NADP(+) = L-glutamyl-tRNA(Glu) + NADPH + H(+). The protein operates within porphyrin-containing compound metabolism; protoporphyrin-IX biosynthesis; 5-aminolevulinate from L-glutamyl-tRNA(Glu): step 1/2. Functionally, catalyzes the NADPH-dependent reduction of glutamyl-tRNA(Glu) to glutamate 1-semialdehyde (GSA). In Shewanella baltica (strain OS185), this protein is Glutamyl-tRNA reductase.